Reading from the N-terminus, the 146-residue chain is 3-dehydroquinate dehydratase (146 aa).

Residue Tyr-24 is the Proton acceptor of the active site. Substrate contacts are provided by Asn-75, His-81, and Asp-88. His-101 (proton donor) is an active-site residue. Substrate contacts are provided by residues 102–103 (LS) and Arg-112.

This sequence belongs to the type-II 3-dehydroquinase family. Homododecamer.

The enzyme catalyses 3-dehydroquinate = 3-dehydroshikimate + H2O. The protein operates within metabolic intermediate biosynthesis; chorismate biosynthesis; chorismate from D-erythrose 4-phosphate and phosphoenolpyruvate: step 3/7. In terms of biological role, catalyzes a trans-dehydration via an enolate intermediate. This Caulobacter vibrioides (strain ATCC 19089 / CIP 103742 / CB 15) (Caulobacter crescentus) protein is 3-dehydroquinate dehydratase.